The following is a 396-amino-acid chain: Tryptophan synthase beta chain (396 aa).

Residue K88 is modified to N6-(pyridoxal phosphate)lysine.

This sequence belongs to the TrpB family. In terms of assembly, tetramer of two alpha and two beta chains. The cofactor is pyridoxal 5'-phosphate.

It carries out the reaction (1S,2R)-1-C-(indol-3-yl)glycerol 3-phosphate + L-serine = D-glyceraldehyde 3-phosphate + L-tryptophan + H2O. It functions in the pathway amino-acid biosynthesis; L-tryptophan biosynthesis; L-tryptophan from chorismate: step 5/5. The beta subunit is responsible for the synthesis of L-tryptophan from indole and L-serine. This chain is Tryptophan synthase beta chain, found in Actinobacillus pleuropneumoniae serotype 5b (strain L20).